We begin with the raw amino-acid sequence, 289 residues long: uncharacterized protein (289 aa).

An N-terminal signal peptide occupies residues 1–19; it reads MAKWLGAPLARGVSTATRA. Transmembrane regions (helical) follow at residues 90-110 and 257-277; these read GLLAAAFVASVLLGVGIGWGV and AALSLSLYVSSDYGGGYLVFA.

It is found in the cell membrane. This is an uncharacterized protein from Mycobacterium tuberculosis (strain CDC 1551 / Oshkosh).